Here is a 611-residue protein sequence, read N- to C-terminus: Developmental and secondary metabolism regulator veA (611 aa).

3 disordered regions span residues methionine 1 to aspartate 57, arginine 222 to aspartate 497, and leucine 511 to alanine 611. Positions lysine 14–aspartate 23 are enriched in polar residues. The Velvet domain maps to glycine 24–arginine 216. The Nuclear localization signal motif lies at glutamine 38–cysteine 43. Residues alanine 242–serine 254 are compositionally biased toward low complexity. The span at serine 274–proline 290 shows a compositional bias: polar residues. Positions tyrosine 330 to proline 340 are enriched in low complexity. The segment covering proline 341 to valine 361 has biased composition (pro residues). Positions threonine 362 to proline 377 are enriched in low complexity. The segment covering arginine 419–threonine 434 has biased composition (polar residues). 2 stretches are compositionally biased toward low complexity: residues glutamine 435 to glutamine 452 and glutamine 461 to methionine 471. Residues proline 455–proline 499 are PEST. Residues leucine 511–isoleucine 533 show a composition bias toward polar residues.

It belongs to the velvet family. VeA subfamily. As to quaternary structure, component of the heterotrimeric velvet complex composed of laeA, veA and velB; VeA acting as a bridging protein between laeA and velB.

The protein localises to the nucleus. It is found in the cytoplasm. Functionally, component of the velvet transcription factor complex that controls sexual/asexual developmental ratio in response to light, promoting sexual development in the darkness while stimulating asexual sporulation under illumination. The velvet complex hat acts as a global regulator for secondary metabolite gene expression. Controls the expression of the dothistromin gene cluster. Regulates hyphal growth and pigment formation. Acts as a positive regulator of virulence. In Dothistroma septosporum (strain NZE10 / CBS 128990) (Red band needle blight fungus), this protein is Developmental and secondary metabolism regulator veA.